Here is an 87-residue protein sequence, read N- to C-terminus: Mu-conotoxin cal12b (87 aa).

Positions 1–19 are cleaved as a signal peptide; that stretch reads MKLTCVLVVLLLLLPYGDL. Residues 20 to 42 constitute a propeptide that is removed on maturation; that stretch reads ITNNYIRGAARKVTPWRRNLKTR. 4 disulfides stabilise this stretch: Cys-45/Cys-58, Cys-53/Cys-70, Cys-60/Cys-75, and Cys-69/Cys-81. Trp-59 is subject to 6'-bromotryptophan. Pro-65 is modified (4-hydroxyproline). 2 positions are modified to 6'-bromotryptophan: Trp-79 and Trp-80. Pro-82 carries the 4-hydroxyproline modification. Trp-86 is subject to 6'-bromotryptophan.

Expressed by the venom duct.

The protein localises to the secreted. In terms of biological role, mu-conotoxins block voltage-gated sodium channels. This toxin reversibly blocks voltage-gated sodium channel in cephalopods (tested on squid giant-fiber-lobe neurons) with an inhibitor constant (Ki) of 15 nmol/l, with no alteration in the voltage dependence of sodium conductance or on the kinetics of inactivation. Has no effect on sodium channels of the two gastropod S.luhuanus and A.californica (which are not natural prey). The protein is Mu-conotoxin cal12b of Californiconus californicus (California cone).